The primary structure comprises 269 residues: Tryptophan synthase alpha chain (269 aa).

Residues glutamate 49 and aspartate 60 each act as proton acceptor in the active site.

Belongs to the TrpA family. Tetramer of two alpha and two beta chains.

The catalysed reaction is (1S,2R)-1-C-(indol-3-yl)glycerol 3-phosphate + L-serine = D-glyceraldehyde 3-phosphate + L-tryptophan + H2O. The protein operates within amino-acid biosynthesis; L-tryptophan biosynthesis; L-tryptophan from chorismate: step 5/5. The alpha subunit is responsible for the aldol cleavage of indoleglycerol phosphate to indole and glyceraldehyde 3-phosphate. The polypeptide is Tryptophan synthase alpha chain (Buchnera aphidicola subsp. Schlechtendalia chinensis).